Here is a 92-residue protein sequence, read N- to C-terminus: Probable K(+)/H(+) antiporter subunit F (92 aa).

3 helical membrane passes run 4–24 (AVVWSVLVAQTMLALAMAFAL), 36–56 (RILGLDTLYINAMLMLITFGI), and 62–82 (VYFETALIIAVIGFASSIALA).

The protein belongs to the CPA3 antiporters (TC 2.A.63) subunit F family. In terms of assembly, may form a hetero-oligomeric complex that consists of six subunits: PhaAB, PhaC, PhaD, PhaE, PhaF and PhaG.

It is found in the cell membrane. Functionally, part of a K(+) efflux system which is required for the adaptation of R.meliloti to alkaline pH as well as for the infection process during symbiotic nodule development. The sequence is that of Probable K(+)/H(+) antiporter subunit F (phaF) from Rhizobium meliloti (strain 1021) (Ensifer meliloti).